The chain runs to 150 residues: Peptide deformylase 2 (150 aa).

Positions 89 and 131 each coordinate Fe cation. The active site involves E132. Residue H135 coordinates Fe cation.

It belongs to the polypeptide deformylase family. It depends on Fe(2+) as a cofactor.

It catalyses the reaction N-terminal N-formyl-L-methionyl-[peptide] + H2O = N-terminal L-methionyl-[peptide] + formate. Its function is as follows. Removes the formyl group from the N-terminal Met of newly synthesized proteins. Requires at least a dipeptide for an efficient rate of reaction. N-terminal L-methionine is a prerequisite for activity but the enzyme has broad specificity at other positions. The chain is Peptide deformylase 2 from Clostridium acetobutylicum (strain ATCC 824 / DSM 792 / JCM 1419 / IAM 19013 / LMG 5710 / NBRC 13948 / NRRL B-527 / VKM B-1787 / 2291 / W).